The sequence spans 379 residues: Ribosomal RNA small subunit methyltransferase H (379 aa).

Residues 71-73 (GGH), glutamate 90, aspartate 157, and histidine 164 contribute to the S-adenosyl-L-methionine site.

This sequence belongs to the methyltransferase superfamily. RsmH family.

It is found in the cytoplasm. It carries out the reaction cytidine(1402) in 16S rRNA + S-adenosyl-L-methionine = N(4)-methylcytidine(1402) in 16S rRNA + S-adenosyl-L-homocysteine + H(+). In terms of biological role, specifically methylates the N4 position of cytidine in position 1402 (C1402) of 16S rRNA. This Treponema pallidum (strain Nichols) protein is Ribosomal RNA small subunit methyltransferase H.